A 147-amino-acid polypeptide reads, in one-letter code: Transcriptional regulator MraZ (147 aa).

2 SpoVT-AbrB domains span residues 5–51 (GTPV…PQPV) and 80–123 (ACDV…DSEK).

The protein belongs to the MraZ family. As to quaternary structure, forms oligomers.

It localises to the cytoplasm. It is found in the nucleoid. The chain is Transcriptional regulator MraZ from Nitrosospira multiformis (strain ATCC 25196 / NCIMB 11849 / C 71).